The primary structure comprises 1253 residues: Myosin-1 (1253 aa).

Positions 1 to 40 (MGHSRRPVGGEKKSRGFGRSKAAADVGDGRQAGKPQVKKA) are disordered. The region spanning 50-729 (IGVSDLTLLS…TLFALEAMRD (680 aa)) is the Myosin motor domain. An ATP-binding site is contributed by 143–150 (GESGAGKT). The residue at position 371 (Ser371) is a Phosphoserine. Residues 418-500 (SIGILDIYGF…PGVFAALNDA (83 aa)) form an actin-binding region. 2 consecutive IQ domains span residues 733 to 753 (HNMA…RIEC) and 754 to 779 (ATRI…QGHQ). Residues 787-977 (RRRMSLLGSR…TIHTGAGEPA (191 aa)) enclose the TH1 domain. Disordered stretches follow at residues 959–1083 (TGDD…PKKP) and 1139–1253 (QVAP…DDDW). Residues 1029 to 1055 (PQPAAAQPAAPQPAARVVPQPVAAVAA) are compositionally biased toward low complexity. Pro residues-rich tracts occupy residues 1068-1081 (APPP…PAPK) and 1143-1155 (APKP…PPAA). Residues 1080–1141 (PKKPTAKALY…PEAYLEEQVA (62 aa)) form the SH3 domain. Composition is skewed to low complexity over residues 1156–1173 (PRST…AKAK) and 1221–1235 (NSAS…LAEA).

It belongs to the TRAFAC class myosin-kinesin ATPase superfamily. Myosin family. Phosphorylation of the TEDS site (Ser-371) is required for the polarization of the actin cytoskeleton. Phosphorylation probably activates the myosin-I ATPase activity.

It is found in the cytoplasm. It localises to the cytoskeleton. The protein localises to the actin patch. Type-I myosin implicated in the organization of the actin cytoskeleton. Required for proper actin cytoskeleton polarization. At the cell cortex, assembles in patch-like structures together with proteins from the actin-polymerizing machinery and promotes actin assembly. Functions as actin nucleation-promoting factor (NPF) for the Arp2/3 complex. Plays an important role in polarized growth, spore germination, hyphal morphogenesis, and septal wall formation. This is Myosin-1 (myoA) from Aspergillus clavatus (strain ATCC 1007 / CBS 513.65 / DSM 816 / NCTC 3887 / NRRL 1 / QM 1276 / 107).